Here is a 227-residue protein sequence, read N- to C-terminus: NAD(P)H-hydrate epimerase (227 aa).

One can recognise a YjeF N-terminal domain in the interval 10–227 (MRALETAAFN…GKIMVQYIGL (218 aa)). 62–66 (NNGGD) contacts (6S)-NADPHX. 2 residues coordinate K(+): N63 and D142. (6S)-NADPHX is bound by residues 146-152 (GIGLNRP) and D176. S179 contributes to the K(+) binding site.

It belongs to the NnrE/AIBP family. It depends on K(+) as a cofactor.

The enzyme catalyses (6R)-NADHX = (6S)-NADHX. The catalysed reaction is (6R)-NADPHX = (6S)-NADPHX. Its function is as follows. Catalyzes the epimerization of the S- and R-forms of NAD(P)HX, a damaged form of NAD(P)H that is a result of enzymatic or heat-dependent hydration. This is a prerequisite for the S-specific NAD(P)H-hydrate dehydratase to allow the repair of both epimers of NAD(P)HX. This chain is NAD(P)H-hydrate epimerase, found in Roseobacter litoralis (strain ATCC 49566 / DSM 6996 / JCM 21268 / NBRC 15278 / OCh 149).